The sequence spans 339 residues: Sulfate/thiosulfate import ATP-binding protein CysA (339 aa).

Positions Ile3–Val237 constitute an ABC transporter domain. ATP is bound at residue Gly35 to Thr42.

This sequence belongs to the ABC transporter superfamily. Sulfate/tungstate importer (TC 3.A.1.6) family. As to quaternary structure, the complex is composed of two ATP-binding proteins (CysA), two transmembrane proteins (CysT and CysW) and a solute-binding protein (CysP).

The protein resides in the cell inner membrane. The enzyme catalyses sulfate(out) + ATP + H2O = sulfate(in) + ADP + phosphate + H(+). It catalyses the reaction thiosulfate(out) + ATP + H2O = thiosulfate(in) + ADP + phosphate + H(+). Its function is as follows. Part of the ABC transporter complex CysAWTP involved in sulfate/thiosulfate import. Responsible for energy coupling to the transport system. The protein is Sulfate/thiosulfate import ATP-binding protein CysA of Caulobacter vibrioides (strain ATCC 19089 / CIP 103742 / CB 15) (Caulobacter crescentus).